A 288-amino-acid polypeptide reads, in one-letter code: Acetyl-coenzyme A carboxylase carboxyl transferase subunit beta (288 aa).

Residues 34–288 form the CoA carboxyltransferase N-terminal domain; sequence LFAKCPACKH…HLVAFHGGGQ (255 aa). Positions 38, 41, 56, and 59 each coordinate Zn(2+). The C4-type zinc finger occupies 38–59; it reads CPACKHMIYKKDLGLAKICPTC.

It belongs to the AccD/PCCB family. Acetyl-CoA carboxylase is a heterohexamer composed of biotin carboxyl carrier protein (AccB), biotin carboxylase (AccC) and two subunits each of ACCase subunit alpha (AccA) and ACCase subunit beta (AccD). The cofactor is Zn(2+).

It is found in the cytoplasm. It catalyses the reaction N(6)-carboxybiotinyl-L-lysyl-[protein] + acetyl-CoA = N(6)-biotinyl-L-lysyl-[protein] + malonyl-CoA. Its pathway is lipid metabolism; malonyl-CoA biosynthesis; malonyl-CoA from acetyl-CoA: step 1/1. Its function is as follows. Component of the acetyl coenzyme A carboxylase (ACC) complex. Biotin carboxylase (BC) catalyzes the carboxylation of biotin on its carrier protein (BCCP) and then the CO(2) group is transferred by the transcarboxylase to acetyl-CoA to form malonyl-CoA. The chain is Acetyl-coenzyme A carboxylase carboxyl transferase subunit beta from Streptococcus dysgalactiae subsp. equisimilis (strain GGS_124).